We begin with the raw amino-acid sequence, 539 residues long: Tetracenomycin B2 monooxygenase-dioxygenase (539 aa).

4 residues coordinate FAD: Leu15, Glu35, Gln128, and Leu152. The active-site Proton acceptor is Tyr231. Asp313 contacts FAD.

The protein belongs to the PheA/TfdB FAD monooxygenase family. Requires FAD as cofactor.

It carries out the reaction tetracenomycin B2 + 2 NADPH + 2 O2 + 2 H(+) = 8-demethyltetracenomycin C + 2 NADP(+) + H2O. The enzyme catalyses tetracenomycin A2 + 2 NADPH + 2 O2 + 2 H(+) = tetracenomycin C + 2 NADP(+) + H2O. The protein operates within antibiotic biosynthesis. Involved in the biosynthesis of elloramycin, an antitumor polyketide. In vivo, probably catalyzes the triple hydroxylation of 8-demethyltetracenomycin A2 (tetracenomycin B2) at positions C-4, C-4a and C-12a to give 8-demethyltetracenomycin C (8-DMTC). In vitro, catalyzes the triple hydroxylation of tetracenomycin A2 (TCM A2) to give tetracenomycin C (TCM C). Uses NADPH as an electron donor and requires molecular O(2). This chain is Tetracenomycin B2 monooxygenase-dioxygenase, found in Streptomyces olivaceus.